A 323-amino-acid polypeptide reads, in one-letter code: Voltage-dependent calcium channel gamma-2 subunit (323 aa).

The chain crosses the membrane as a helical span at residues 10-30; that stretch reads MLLTTVGAFAAFSLMTIAVGT. Asn48 is a glycosylation site (N-linked (GlcNAc...) asparagine). Helical transmembrane passes span 104–124, 134–154, and 182–202; these read SSIFPILSVILLFMGGLCIAA, IILSAGIFFVSAGLSNIIGII, and FGALSFIIAEMVGVLAVHMFI. The interval 233–261 is disordered; that stretch reads YQRRSRSSSRSTEPSHSRDASPVGVKGFN. Ser253 carries the post-translational modification Phosphoserine. Residue Tyr271 is modified to Phosphotyrosine. Thr321 carries the phosphothreonine; by PKA modification.

This sequence belongs to the PMP-22/EMP/MP20 family. CACNG subfamily. The L-type calcium channel is composed of five subunits: alpha-1, alpha-2/delta, beta and gamma. Interacts with the PDZ domains of DLG4/PSD-95 and DLG1/SAP97. May interact with GOPC. Acts as an auxiliary subunit for AMPA-selective glutamate receptors (AMPARs). Found in a complex with GRIA1, GRIA2, GRIA3, GRIA4, CNIH2, CNIH3, CACNG3, CACNG4, CACNG5, CACNG7 and CACNG8. Interacts with GRIA1 and GRIA2. Interacts with MPP2. Phosphorylation of Thr-321 by PKA impairs interaction with DLG1 and DLG4. Brain.

The protein resides in the membrane. It is found in the synapse. It localises to the synaptosome. Regulates the trafficking and gating properties of AMPA-selective glutamate receptors (AMPARs). Promotes their targeting to the cell membrane and synapses and modulates their gating properties by slowing their rates of activation, deactivation and desensitization. Does not show subunit-specific AMPA receptor regulation and regulates all AMPAR subunits. Thought to stabilize the calcium channel in an inactivated (closed) state. The chain is Voltage-dependent calcium channel gamma-2 subunit (Cacng2) from Mus musculus (Mouse).